The following is a 565-amino-acid chain: Receptor-like serine/threonine-protein kinase NCRK (565 aa).

Residues 1–23 (MKMRVETALAILLVLISIQQCYG) form the signal peptide. Residues 24 to 103 (GVSNYTCTCF…SKKQYLSRKL (80 aa)) are Extracellular-facing. Asn-27, Asn-37, Asn-45, Asn-77, and Asn-85 each carry an N-linked (GlcNAc...) asparagine glycan. A helical transmembrane segment spans residues 104 to 124 (VIVILLFCGVLISLAFLASMI). Residues 125-565 (CYICRKDKFS…PVLLEPSAHI (441 aa)) lie on the Cytoplasmic side of the membrane. A Protein kinase domain is found at 210 to 495 (FSSNSVIGHG…REVVQILSTI (286 aa)). ATP contacts are provided by residues 216 to 224 (IGHGGSSCV) and Lys-238. The active-site Proton acceptor is Asp-339. 2 positions are modified to phosphothreonine: Thr-378 and Thr-383. Tyr-391 carries the post-translational modification Phosphotyrosine.

Belongs to the protein kinase superfamily. Ser/Thr protein kinase family. As to quaternary structure, interacts with ARAC5. In terms of processing, phosphorylated. In terms of tissue distribution, mostly expressed in leaf primordia, root and shoot apical meristems, lateral root primordia, and stele of older roots and hypocotyls. In leaves and cotyledons, highest levels observed in trichomes, vasculatures, and hydathode endothem.

The protein resides in the cell membrane. It localises to the prevacuolar compartment membrane. The protein localises to the endosome. The enzyme catalyses L-seryl-[protein] + ATP = O-phospho-L-seryl-[protein] + ADP + H(+). It carries out the reaction L-threonyl-[protein] + ATP = O-phospho-L-threonyl-[protein] + ADP + H(+). In Arabidopsis thaliana (Mouse-ear cress), this protein is Receptor-like serine/threonine-protein kinase NCRK (NCRK).